An 835-amino-acid polypeptide reads, in one-letter code: Leucine--tRNA ligase (835 aa).

Residues proline 36–histidine 46 carry the 'HIGH' region motif. The 'KMSKS' region motif lies at lysine 602–serine 606. Lysine 605 contributes to the ATP binding site.

This sequence belongs to the class-I aminoacyl-tRNA synthetase family.

It is found in the cytoplasm. The enzyme catalyses tRNA(Leu) + L-leucine + ATP = L-leucyl-tRNA(Leu) + AMP + diphosphate. The polypeptide is Leucine--tRNA ligase (Rickettsia massiliae (strain Mtu5)).